Here is a 620-residue protein sequence, read N- to C-terminus: MDSHTLLQALIYLGSAALIVPIAVRLGLGSVLGYLIAGCIIGPWGLRLVTDAESILHFAEIGVVLMLFVIGLELDPQRLWKLRASVFGGGALQMVVCGGLIGLFCMFLGLRWQVAELIGMTLALSSTAIAMQAMNERNLTVSQVGRSAFAVLLFQDIAAIPLVAMIPLLAASGASTTLGAFALSALKVAGALALVVLLGRYVTRPALRFVARSGLREVFSAVALFLVFGFGLLLEEVGLSMAMGAFLAGVLLASSEYRHALESDIEPFKGLLLGLFFIGVGMSIDFGTLVENPLRILLLLAGFLTIKIVMLWLVARPLGVPAKQRRWFAVLLGQGSEFAFVVFGAAQMAGVLEPEWAKALTLAVALSMAATPIFLVLLTRMEKTATGEAREADEIDEEQPRVIVAGFGRFGQIAGRLLLSSGVKMVVLDHDPDHIETLRKFGMKVFYGDATRMDLLESAGAAKAEVLINAIDDPQTNLQLSELVKSHFPHLQIIARARDVDHYIRLRQAGVAMPERETFEGALKSGRQALEALGLGRYEARERADLFRHFNTRMVEEMAKGENDPLSRAAAYKRTSAMLSEIITEDREHLSLIQRHGWQGTAEGKHSGEAADEPEVKPSI.

The next 12 membrane-spanning stretches (helical) occupy residues 4–24, 26–46, 54–74, 90–110, 114–134, 149–169, 178–198, 218–238, 270–290, 294–314, 327–347, and 359–379; these read HTLLQALIYLGSAALIVPIAV, LGLGSVLGYLIAGCIIGPWGL, SILHFAEIGVVLMLFVIGLEL, GALQMVVCGGLIGLFCMFLGL, VAELIGMTLALSSTAIAMQAM, FAVLLFQDIAAIPLVAMIPLL, LGAFALSALKVAGALALVVLL, VFSAVALFLVFGFGLLLEEVG, GLLLGLFFIGVGMSIDFGTLV, LRILLLLAGFLTIKIVMLWLV, WFAVLLGQGSEFAFVVFGAAQ, and ALTLAVALSMAATPIFLVLLT. Residues 399 to 518 enclose the RCK N-terminal domain; sequence QPRVIVAGFG…AGVAMPERET (120 aa). The disordered stretch occupies residues 599 to 620; that stretch reads QGTAEGKHSGEAADEPEVKPSI.

It belongs to the monovalent cation:proton antiporter 2 (CPA2) transporter (TC 2.A.37) family. KefC subfamily. As to quaternary structure, homodimer. Interacts with the regulatory subunit KefF.

Its subcellular location is the cell inner membrane. Pore-forming subunit of a potassium efflux system that confers protection against electrophiles. Catalyzes K(+)/H(+) antiport. The sequence is that of Glutathione-regulated potassium-efflux system protein KefC from Salmonella schwarzengrund (strain CVM19633).